The following is a 333-amino-acid chain: Cap-specific mRNA (nucleoside-2'-O-)-methyltransferase (333 aa).

Y22 contacts mRNA. The S-adenosyl-L-methionine site is built by Q39, Y66, G68, G72, D95, R97, V116, and D138. The binding to NPH-I stretch occupies residues 169–249 (PVASSLKWRC…NKIVRNKVVV (81 aa)). Positions 169–333 (PVASSLKWRC…NSKRSVRGNK (165 aa)) are binding to Rap94. K175 (for methyltransferase activity) is an active-site residue. Residues 177–180 (RCPF), D182, 205–207 (SAE), and E233 each bind mRNA.

Belongs to the class I-like SAM-binding methyltransferase superfamily. Poxvirus/kinetoplastid 2'-O-MTase family. Interacts with poly(A) polymerase catalytic subunit OPG063. Interacts with OPG109 and OPG123; these interactions might help linking transcription to capping and polyadenylation.

It is found in the virion. It catalyses the reaction a 5'-end (N(7)-methyl 5'-triphosphoguanosine)-ribonucleoside in mRNA + S-adenosyl-L-methionine = a 5'-end (N(7)-methyl 5'-triphosphoguanosine)-(2'-O-methyl-ribonucleoside) in mRNA + S-adenosyl-L-homocysteine + H(+). Displays methyltransferase, positive regulation of the poly(A) polymerase and transcription elongation activities. Involved in the modification of both mRNA ends and in intermediate and late gene positive transcription elongation. At the mRNAs 5' end, methylates the ribose 2' OH group of the first transcribed nucleotide, thereby producing a 2'-O-methylpurine cap. At the 3' end, functions as a processivity factor which stimulates the activity of the viral poly(A) polymerase OPG063 that creates mRNA's poly(A) tail. In the presence of OPG102, OPG063 does not dissociate from the RNA allowing tail elongation to around 250 adenylates. The polypeptide is Cap-specific mRNA (nucleoside-2'-O-)-methyltransferase (OPG102) (Homo sapiens (Human)).